The sequence spans 460 residues: Carboxypeptidase DacB (460 aa).

An N-terminal signal peptide occupies residues 1–28 (MRPTRWRRSTHVAVGVAVLALVVAVVAA). The segment at 39 to 64 (AAEAVPPAPPPATADPGVVPVDLSAP) is disordered. Ser-113 (acyl-ester intermediate) is an active-site residue. Lys-116 serves as the catalytic Proton acceptor. Ser-294 is a catalytic residue.

The protein belongs to the peptidase S13 family.

Functionally, carboxypeptidase that cleaves terminal D-alanine from peptidoglycan in the mycobacterial cell wall. May cleave L-Lys-D-Ala and/or D-Ala-D-Ala peptide bonds. Exerts important effects on mycobacterial cell morphology and cell division. The sequence is that of Carboxypeptidase DacB from Mycolicibacterium smegmatis (strain ATCC 700084 / mc(2)155) (Mycobacterium smegmatis).